Consider the following 360-residue polypeptide: NAD(P)H-quinone oxidoreductase subunit 1, chloroplastic (360 aa).

9 helical membrane-spanning segments follow: residues 27-47 (IWIF…VLVI), 98-118 (FSIG…VIPF), 129-149 (IGIF…LMSG), 165-185 (AAQS…ISLL), 203-223 (FWGW…ISSL), 248-268 (YSGI…LISS), 269-289 (LFVT…ISIL), 297-317 (IFGT…FLFI), and 340-360 (FLLP…LFSL).

The protein belongs to the complex I subunit 1 family. As to quaternary structure, NDH is composed of at least 16 different subunits, 5 of which are encoded in the nucleus.

The protein resides in the plastid. It localises to the chloroplast thylakoid membrane. The catalysed reaction is a plastoquinone + NADH + (n+1) H(+)(in) = a plastoquinol + NAD(+) + n H(+)(out). The enzyme catalyses a plastoquinone + NADPH + (n+1) H(+)(in) = a plastoquinol + NADP(+) + n H(+)(out). In terms of biological role, NDH shuttles electrons from NAD(P)H:plastoquinone, via FMN and iron-sulfur (Fe-S) centers, to quinones in the photosynthetic chain and possibly in a chloroplast respiratory chain. The immediate electron acceptor for the enzyme in this species is believed to be plastoquinone. Couples the redox reaction to proton translocation, and thus conserves the redox energy in a proton gradient. This is NAD(P)H-quinone oxidoreductase subunit 1, chloroplastic from Nasturtium officinale (Watercress).